Here is a 554-residue protein sequence, read N- to C-terminus: Trimethyltridecatetraene synthase (554 aa).

Residues 1–21 form a helical membrane-spanning segment; it reads MSAAVALAVILAVYVVLRYIS. C464 is a binding site for heme.

Belongs to the cytochrome P450 family. The cofactor is heme.

It localises to the membrane. It carries out the reaction (6E,10E)-geranyllinalool + reduced [NADPH--hemoprotein reductase] + O2 = (3E,7E)-4,8,12-trimethyltrideca 1,3,7,11-tetraene + but-3-en-2-one + oxidized [NADPH--hemoprotein reductase] + 2 H2O + H(+). It participates in secondary metabolite biosynthesis; terpenoid biosynthesis. In terms of biological role, component of the volatile terpenes biosynthesis pathways. Converts mainly geranyllinalool to trimethyltridecatetraene (TMTT). The polypeptide is Trimethyltridecatetraene synthase (Zea mays (Maize)).